We begin with the raw amino-acid sequence, 385 residues long: Mannitol-1-phosphate 5-dehydrogenase (385 aa).

3–14 (ALQFGAGNIGRG) contributes to the NAD(+) binding site.

Belongs to the mannitol dehydrogenase family.

It catalyses the reaction D-mannitol 1-phosphate + NAD(+) = beta-D-fructose 6-phosphate + NADH + H(+). The chain is Mannitol-1-phosphate 5-dehydrogenase from Buchnera aphidicola subsp. Acyrthosiphon pisum (strain 5A).